A 245-amino-acid polypeptide reads, in one-letter code: DNA repair protein RecO (245 aa).

Belongs to the RecO family.

Functionally, involved in DNA repair and RecF pathway recombination. In Porphyromonas gingivalis (strain ATCC 33277 / DSM 20709 / CIP 103683 / JCM 12257 / NCTC 11834 / 2561), this protein is DNA repair protein RecO.